Consider the following 274-residue polypeptide: Cytochrome c oxidase subunit 3 (274 aa).

Topologically, residues 2 to 15 are cytoplasmic; it reads AHVKNHDYQILPPS. The helical transmembrane segment at 16-36 threads the bilayer; sequence IWPFFGAIGAFVMLTGAVAWM. The Periplasmic portion of the chain corresponds to 37-48; it reads KGITFFGLPVEG. The helical transmembrane segment at 49–77 threads the bilayer; sequence PWMFLIGLVGVLYVMFGWWADVVNEGETG. At 78–79 the chain is on the cytoplasmic side; sequence EH. The chain crosses the membrane as a helical span at residues 80–115; that stretch reads TPVVRIGLQYGFILFIMSEVMFFVAWFWAFIKNALY. At 116-139 the chain is on the periplasmic side; it reads PMGPDSPIKDGVWPPEGIVTFDPW. The helical transmembrane segment at 140 to 166 threads the bilayer; that stretch reads HLPLINTLILLLSGVAVTWAHHAFVLE. Residues 167–168 lie on the Cytoplasmic side of the membrane; it reads GD. Residues 169–197 form a helical membrane-spanning segment; it reads RKTTINGLIVAVILGVCFTGLQAYEYSHA. Residues 198–203 are Periplasmic-facing; that stretch reads AFGLAD. The chain crosses the membrane as a helical span at residues 204–237; sequence TVYAGAFYMATGFHGAHVIIGTIFLFVCLIRLLK. Over 238–244 the chain is Cytoplasmic; that stretch reads GQMTQKQ. The helical transmembrane segment at 245–274 threads the bilayer; sequence HVGFEAAAWYWHFVDVVWLFLFVVIYIWGR.

It belongs to the cytochrome c oxidase subunit 3 family.

It is found in the cell inner membrane. The enzyme catalyses 4 Fe(II)-[cytochrome c] + O2 + 8 H(+)(in) = 4 Fe(III)-[cytochrome c] + 2 H2O + 4 H(+)(out). The chain is Cytochrome c oxidase subunit 3 (ctaE) from Paracoccus denitrificans.